The primary structure comprises 318 residues: Homoserine kinase (318 aa).

97-107 provides a ligand contact to ATP; it reads PIGSGLGSSAC.

It belongs to the GHMP kinase family. Homoserine kinase subfamily.

It is found in the cytoplasm. The enzyme catalyses L-homoserine + ATP = O-phospho-L-homoserine + ADP + H(+). The protein operates within amino-acid biosynthesis; L-threonine biosynthesis; L-threonine from L-aspartate: step 4/5. Functionally, catalyzes the ATP-dependent phosphorylation of L-homoserine to L-homoserine phosphate. The sequence is that of Homoserine kinase from Photobacterium profundum (strain SS9).